The following is a 647-amino-acid chain: Neutral endopeptidase (647 aa).

Residues 1 to 647 (MRRYLAVRGG…LDPEDRITIW (647 aa)) enclose the Peptidase M13 domain. H496 contacts Zn(2+). E497 is a catalytic residue. Zn(2+) is bound by residues H500 and E556. D560 serves as the catalytic Proton donor.

It belongs to the peptidase M13 family. Zn(2+) is required as a cofactor.

The protein is Neutral endopeptidase (pepO) of Lactobacillus helveticus (Lactobacillus suntoryeus).